A 341-amino-acid polypeptide reads, in one-letter code: Mitochondrial transcription factor 1 (341 aa).

4 residues coordinate S-adenosyl-L-methionine: Leu-23, Glu-77, Asp-101, and Asn-137.

This sequence belongs to the class I-like SAM-binding methyltransferase superfamily. rRNA adenine N(6)-methyltransferase family.

Its subcellular location is the mitochondrion. In terms of biological role, mitochondrial transcription factor that confers selective promoter recognition on the core subunit of the yeast mitochondrial RNA polymerase. Interacts with DNA in a non-specific manner. This Saccharomyces paradoxus (Yeast) protein is Mitochondrial transcription factor 1 (MTF1).